We begin with the raw amino-acid sequence, 705 residues long: Probable glutamate carboxypeptidase AMP1 (705 aa).

At Met-1–Pro-24 the chain is on the cytoplasmic side. A helical; Signal-anchor for type II membrane protein transmembrane segment spans residues Leu-25 to Leu-42. Over His-43 to Thr-705 the chain is Extracellular. Residues Asn-74, Asn-137, and Asn-322 are each glycosylated (N-linked (GlcNAc...) asparagine). The catalytic stretch occupies residues Gly-255 to Leu-548. Residues His-356 and Asp-366 each coordinate Zn(2+). Residue Glu-403 is the Nucleophile of the active site. 3 residues coordinate Zn(2+): Glu-404, Asp-432, and His-514. Asn-676 carries N-linked (GlcNAc...) asparagine glycosylation.

It belongs to the peptidase M28 family. M28B subfamily. Zn(2+) serves as cofactor. Expressed in all plant parts. Highest levels in the bolt stem, inflorescence, root and silique. Low level in leaves.

The protein resides in the endoplasmic reticulum membrane. It carries out the reaction Release of an unsubstituted, C-terminal glutamyl residue, typically from Ac-Asp-Glu or folylpoly-gamma-glutamates.. In terms of biological role, may modulate the level of one or more small signaling molecules that have a role in regulating meristem function. May play a role in balancing and restricting the meristem-promoting activity of auxin signaling. Involved in ethylene and giberellin (GA) signaling pathways or in a parallel pathway controlling cell and hypocotyl elongation and cellular organization. Involved in abscisic acid (ABA) signaling pathway. Plays a negative role in ABA-mediated seed germination and seedling development. Acts in association with LAMP1 to suppress ectopic stem cell niche formation in the shoot apical meristem (SAM) independently of cytokinin signaling pathway. Modulates responses to ABA, oxidative stress and abotic stress. Acts as a negative regulator of the ABA signaling pathway to modulate freezing and drought stress responses. Mediates carbon and amino acid metabolism. May be involved in the acquisition and/or maintenance of seed dormancy. Involved in the regulation of response to heat shock and plant defense. This chain is Probable glutamate carboxypeptidase AMP1, found in Arabidopsis thaliana (Mouse-ear cress).